The following is a 192-amino-acid chain: Ion-translocating oxidoreductase complex subunit A (192 aa).

Helical transmembrane passes span 5–25, 39–59, 72–92, 102–122, 134–154, and 171–191; these read ILLLIGTVLVNNFVLVKFLGL, IGMGLATTFVLTMASVCAYLV, LRTMSFILVIAVVVQFTEMVV, LLGIFLPLITTNCAVLGVALL, IIYGFGAAVGFSLVLILFASM, and SIAMITAGLMSLAFMGFTGLV.

This sequence belongs to the NqrDE/RnfAE family. In terms of assembly, the complex is composed of six subunits: RnfA, RnfB, RnfC, RnfD, RnfE and RnfG.

The protein localises to the cell inner membrane. Functionally, part of a membrane-bound complex that couples electron transfer with translocation of ions across the membrane. This Vibrio vulnificus (strain CMCP6) protein is Ion-translocating oxidoreductase complex subunit A.